The primary structure comprises 450 residues: Tubulin alpha-1 chain (450 aa).

GTP is bound by residues Gln-11, Glu-71, Gly-144, Thr-145, Thr-179, Asn-206, and Asn-228. A Mg(2+)-binding site is contributed by Glu-71. Glu-254 is a catalytic residue.

It belongs to the tubulin family. Dimer of alpha and beta chains. A typical microtubule is a hollow water-filled tube with an outer diameter of 25 nm and an inner diameter of 15 nM. Alpha-beta heterodimers associate head-to-tail to form protofilaments running lengthwise along the microtubule wall with the beta-tubulin subunit facing the microtubule plus end conferring a structural polarity. Microtubules usually have 13 protofilaments but different protofilament numbers can be found in some organisms and specialized cells. Mg(2+) is required as a cofactor. Undergoes a tyrosination/detyrosination cycle, the cyclic removal and re-addition of a C-terminal tyrosine residue by the enzymes tubulin tyrosine carboxypeptidase (TTCP) and tubulin tyrosine ligase (TTL), respectively.

The protein resides in the cytoplasm. Its subcellular location is the cytoskeleton. The catalysed reaction is GTP + H2O = GDP + phosphate + H(+). Its function is as follows. Tubulin is the major constituent of microtubules, a cylinder consisting of laterally associated linear protofilaments composed of alpha- and beta-tubulin heterodimers. Microtubules grow by the addition of GTP-tubulin dimers to the microtubule end, where a stabilizing cap forms. Below the cap, tubulin dimers are in GDP-bound state, owing to GTPase activity of alpha-tubulin. In Oryza sativa subsp. japonica (Rice), this protein is Tubulin alpha-1 chain (TUBA1).